The sequence spans 125 residues: Small ribosomal subunit protein uS13 (125 aa).

Residues 92–125 form a disordered region; the sequence is RRSLPVRGQRTQTNARTRKGKRKTVAGKKKATKK. A compositionally biased stretch (basic residues) spans 107–125; sequence RTRKGKRKTVAGKKKATKK.

It belongs to the universal ribosomal protein uS13 family. As to quaternary structure, part of the 30S ribosomal subunit. Forms a loose heterodimer with protein S19. Forms two bridges to the 50S subunit in the 70S ribosome.

Its function is as follows. Located at the top of the head of the 30S subunit, it contacts several helices of the 16S rRNA. In the 70S ribosome it contacts the 23S rRNA (bridge B1a) and protein L5 of the 50S subunit (bridge B1b), connecting the 2 subunits; these bridges are implicated in subunit movement. Contacts the tRNAs in the A and P-sites. This Chlorobium phaeobacteroides (strain DSM 266 / SMG 266 / 2430) protein is Small ribosomal subunit protein uS13.